A 379-amino-acid polypeptide reads, in one-letter code: Glutamate 5-kinase (379 aa).

Lys15 is an ATP binding site. Ser56, Asp143, and Asn155 together coordinate substrate. 175 to 176 (SD) is an ATP binding site. The PUA domain maps to 281 to 358 (RGTLAIDAGA…SDAAQLLGVR (78 aa)).

The protein belongs to the glutamate 5-kinase family.

The protein resides in the cytoplasm. It catalyses the reaction L-glutamate + ATP = L-glutamyl 5-phosphate + ADP. Its pathway is amino-acid biosynthesis; L-proline biosynthesis; L-glutamate 5-semialdehyde from L-glutamate: step 1/2. In terms of biological role, catalyzes the transfer of a phosphate group to glutamate to form L-glutamate 5-phosphate. This chain is Glutamate 5-kinase, found in Nitrobacter winogradskyi (strain ATCC 25391 / DSM 10237 / CIP 104748 / NCIMB 11846 / Nb-255).